We begin with the raw amino-acid sequence, 349 residues long: 3-dehydroquinate synthase (349 aa).

NAD(+)-binding positions include 63-68 (DGEEYK), 97-101 (GVIGD), 121-122 (TT), Lys-134, Lys-143, and 161-164 (FLTT). Zn(2+) is bound by residues Glu-176, His-235, and His-252.

Belongs to the sugar phosphate cyclases superfamily. Dehydroquinate synthase family. It depends on Co(2+) as a cofactor. Zn(2+) is required as a cofactor. NAD(+) serves as cofactor.

Its subcellular location is the cytoplasm. It catalyses the reaction 7-phospho-2-dehydro-3-deoxy-D-arabino-heptonate = 3-dehydroquinate + phosphate. It participates in metabolic intermediate biosynthesis; chorismate biosynthesis; chorismate from D-erythrose 4-phosphate and phosphoenolpyruvate: step 2/7. Its function is as follows. Catalyzes the conversion of 3-deoxy-D-arabino-heptulosonate 7-phosphate (DAHP) to dehydroquinate (DHQ). In Sulfurimonas denitrificans (strain ATCC 33889 / DSM 1251) (Thiomicrospira denitrificans (strain ATCC 33889 / DSM 1251)), this protein is 3-dehydroquinate synthase.